Consider the following 422-residue polypeptide: Phosphoserine aminotransferase 2, chloroplastic (422 aa).

A chloroplast-targeting transit peptide spans 1 to 50 (MAASTNSFLIGNQTQIPSLKPKSISQSFIHFTKPNTINLTTRTKSVSIRC). A51 is subject to N-acetylalanine. Residue R101 participates in L-glutamate binding. Residues 135–136 (AT), W161, T211, D233, and Q256 each bind pyridoxal 5'-phosphate. K257 is subject to N6-(pyridoxal phosphate)lysine. Residue 298–299 (NT) participates in pyridoxal 5'-phosphate binding.

Belongs to the class-V pyridoxal-phosphate-dependent aminotransferase family. SerC subfamily. Pyridoxal 5'-phosphate is required as a cofactor.

It localises to the plastid. The protein localises to the chloroplast. The enzyme catalyses O-phospho-L-serine + 2-oxoglutarate = 3-phosphooxypyruvate + L-glutamate. It carries out the reaction 4-(phosphooxy)-L-threonine + 2-oxoglutarate = (R)-3-hydroxy-2-oxo-4-phosphooxybutanoate + L-glutamate. Its pathway is amino-acid biosynthesis; L-serine biosynthesis; L-serine from 3-phospho-D-glycerate: step 2/3. Its function is as follows. Involved in the plastidial phosphorylated pathway of serine biosynthesis (PPSB). Catalyzes the reversible conversion of 3-phosphohydroxypyruvate to phosphoserine. This Arabidopsis thaliana (Mouse-ear cress) protein is Phosphoserine aminotransferase 2, chloroplastic (PSAT2).